We begin with the raw amino-acid sequence, 129 residues long: Glycine cleavage system H protein (129 aa).

In terms of domain architecture, Lipoyl-binding spans 24–106 (IAVIGITAYA…YGDGWLIKVR (83 aa)). Lysine 65 bears the N6-lipoyllysine mark.

This sequence belongs to the GcvH family. The glycine cleavage system is composed of four proteins: P, T, L and H. Requires (R)-lipoate as cofactor.

Functionally, the glycine cleavage system catalyzes the degradation of glycine. The H protein shuttles the methylamine group of glycine from the P protein to the T protein. In Synechococcus sp. (strain JA-2-3B'a(2-13)) (Cyanobacteria bacterium Yellowstone B-Prime), this protein is Glycine cleavage system H protein.